The chain runs to 252 residues: Small ribosomal subunit protein uS2 (252 aa).

The protein belongs to the universal ribosomal protein uS2 family.

This chain is Small ribosomal subunit protein uS2, found in Chlorobium phaeobacteroides (strain DSM 266 / SMG 266 / 2430).